Reading from the N-terminus, the 166-residue chain is Cyanate hydratase (166 aa).

Catalysis depends on residues Arg-92, Glu-95, and Ser-118.

The protein belongs to the cyanase family.

The enzyme catalyses cyanate + hydrogencarbonate + 3 H(+) = NH4(+) + 2 CO2. Functionally, catalyzes the reaction of cyanate with bicarbonate to produce ammonia and carbon dioxide. In Sorghum bicolor (Sorghum), this protein is Cyanate hydratase.